The sequence spans 179 residues: NADH-quinone oxidoreductase subunit B (179 aa).

[4Fe-4S] cluster contacts are provided by Cys-35, Cys-36, Cys-100, and Cys-129.

It belongs to the complex I 20 kDa subunit family. NDH-1 is composed of 14 different subunits. Subunits NuoB, C, D, E, F, and G constitute the peripheral sector of the complex. Requires [4Fe-4S] cluster as cofactor.

The protein resides in the cell inner membrane. The enzyme catalyses a quinone + NADH + 5 H(+)(in) = a quinol + NAD(+) + 4 H(+)(out). NDH-1 shuttles electrons from NADH, via FMN and iron-sulfur (Fe-S) centers, to quinones in the respiratory chain. Couples the redox reaction to proton translocation (for every two electrons transferred, four hydrogen ions are translocated across the cytoplasmic membrane), and thus conserves the redox energy in a proton gradient. This is NADH-quinone oxidoreductase subunit B from Aquifex aeolicus (strain VF5).